A 494-amino-acid polypeptide reads, in one-letter code: Ketol-acid reductoisomerase (NADP(+)) (494 aa).

The region spanning 14-208 (LDQLGRCRFM…GGHRAGCLES (195 aa)) is the KARI N-terminal Rossmann domain. NADP(+)-binding positions include 45 to 48 (CGAQ), Arg68, Arg76, Ser78, and 108 to 110 (DKQ). His132 is an active-site residue. Residue Gly158 coordinates NADP(+). 2 KARI C-terminal knotted domains span residues 209–344 (SFVA…NYPD) and 345–487 (SSLE…MTDM). Mg(2+)-binding residues include Asp217, Glu221, Glu389, and Glu393. Ser414 contacts substrate.

The protein belongs to the ketol-acid reductoisomerase family. Requires Mg(2+) as cofactor.

The catalysed reaction is (2R)-2,3-dihydroxy-3-methylbutanoate + NADP(+) = (2S)-2-acetolactate + NADPH + H(+). It catalyses the reaction (2R,3R)-2,3-dihydroxy-3-methylpentanoate + NADP(+) = (S)-2-ethyl-2-hydroxy-3-oxobutanoate + NADPH + H(+). It participates in amino-acid biosynthesis; L-isoleucine biosynthesis; L-isoleucine from 2-oxobutanoate: step 2/4. It functions in the pathway amino-acid biosynthesis; L-valine biosynthesis; L-valine from pyruvate: step 2/4. Involved in the biosynthesis of branched-chain amino acids (BCAA). Catalyzes an alkyl-migration followed by a ketol-acid reduction of (S)-2-acetolactate (S2AL) to yield (R)-2,3-dihydroxy-isovalerate. In the isomerase reaction, S2AL is rearranged via a Mg-dependent methyl migration to produce 3-hydroxy-3-methyl-2-ketobutyrate (HMKB). In the reductase reaction, this 2-ketoacid undergoes a metal-dependent reduction by NADPH to yield (R)-2,3-dihydroxy-isovalerate. The chain is Ketol-acid reductoisomerase (NADP(+)) from Aliivibrio salmonicida (strain LFI1238) (Vibrio salmonicida (strain LFI1238)).